A 275-amino-acid chain; its full sequence is MDYEVCRKVWESHVPCQFTLQSSGGTHGEPLPFYTMLPRFSYLALAIQKVLSSFNRRDDGEKVHSDKMWLEHNGIPLKMYIPIGVIYDQANLSENDSILEIIVRTSQPPPQFQMVDRDMMEAMFMQNIKEADYLKTKAEITKNMMKDESAQLWRSVCNIPDNFDEFWTIVQKLMETSEGNEFAHIPLRVYVKNQAFKQALITAKHPDGSLRTIGEAVSDVLSSSSSSSTDSQSEHPPRLISHGIDIPHHTPLIFAAKNLSYPDNFIHVVLLLVVP.

Lys-129 is covalently cross-linked (Glycyl lysine isopeptide (Lys-Gly) (interchain with G-Cter in lgg-3/ATG12)). The segment covering 221 to 231 (LSSSSSSSTDS) has biased composition (low complexity). A disordered region spans residues 221–241 (LSSSSSSSTDSQSEHPPRLIS).

The protein belongs to the ATG5 family. Most likely a component of a complex at least containing atg-5, lgg-3/ATG12, atg-16.1 and/or atg-16.2. Interacts with lgg-3/ATG12. Interacts with atg-16.1 (via N-terminus) and atg-16.2 (via N-terminus). Post-translationally, conjugated to lgg-3/ATG12; which is essential for autophagy.

The protein resides in the preautophagosomal structure membrane. Its function is as follows. Involved in autophagic vesicle formation. Conjugation with lgg-3/ATG12, through a ubiquitin-like conjugating system involving atg-7 as an E1-like activating enzyme and atg-10 as an E2-like conjugating enzyme, is essential for its function. Most likely a component of an atg-5-lgg-3-atg-16 complex that promotes autophagosome formation by associating with lgg-2, but not lgg-1, at the preautophagosomal membrane. Probably, as part of an atg-5-lgg-3-atg-16 complex, required for lgg-1 lipidation; the complex acts as an E3-like enzyme promoting atg-3-mediated lgg-1 lipidation. Furthermore, association with atg-16.2 is required for the nucleation of lgg-1 positive autophagic vesicles. The chain is Autophagy-related protein 5 from Caenorhabditis elegans.